The following is an 88-amino-acid chain: FXYD domain-containing ion transport regulator 3 (88 aa).

An N-terminal signal peptide occupies residues methionine 1 to alanine 20. Residues asparagine 21–arginine 38 lie on the Extracellular side of the membrane. Residues valine 39 to glycine 59 form a helical membrane-spanning segment. At lysine 60 to cysteine 88 the chain is on the cytoplasmic side. Residues serine 66–cysteine 88 are disordered.

It belongs to the FXYD family. As to quaternary structure, regulatory subunit of the sodium/potassium-transporting ATPase which is composed of a catalytic alpha subunit, a non-catalytic beta subunit and an additional regulatory subunit. Interacts with catalytic alpha subunit ATP1A1. Also interacts with non-catalytic beta subunit ATP1B1. Interacts with the alpha1-beta1, alpha2-beta1 and alpha3-beta1 NKA isozymes. Post-translationally, glutathionylated.

The protein resides in the cell membrane. Associates with and regulates the activity of the sodium/potassium-transporting ATPase (NKA) which transports Na(+) out of the cell and K(+) into the cell. Reduces glutathionylation of the NKA beta-1 subunit ATP1B1, thus reversing glutathionylation-mediated inhibition of ATP1B1. Induces a hyperpolarization-activated chloride current when expressed in Xenopus oocytes. The sequence is that of FXYD domain-containing ion transport regulator 3 (Fxyd3) from Rattus norvegicus (Rat).